A 357-amino-acid polypeptide reads, in one-letter code: Selenide, water dikinase (357 aa).

Cys25 is an active-site residue. Residues Lys28 and 57-59 contribute to the ATP site; that span reads TAD. Asp60 is a binding site for Mg(2+). ATP is bound by residues Asp77, Asp100, and 148–150; that span reads GHS. Asp100 contributes to the Mg(2+) binding site. Asp236 lines the Mg(2+) pocket.

The protein belongs to the selenophosphate synthase 1 family. Class I subfamily. In terms of assembly, homodimer. Requires Mg(2+) as cofactor.

It catalyses the reaction hydrogenselenide + ATP + H2O = selenophosphate + AMP + phosphate + 2 H(+). In terms of biological role, synthesizes selenophosphate from selenide and ATP. This chain is Selenide, water dikinase, found in Pseudomonas straminea.